Here is a 233-residue protein sequence, read N- to C-terminus: Protein Thf1 (233 aa).

Residues Asp-183–Val-205 are a coiled coil. Positions Asp-213–Glu-233 are disordered.

This sequence belongs to the THF1 family.

In terms of biological role, may be involved in photosynthetic membrane biogenesis. The sequence is that of Protein Thf1 from Trichormus variabilis (strain ATCC 29413 / PCC 7937) (Anabaena variabilis).